The following is a 245-amino-acid chain: Small ribosomal subunit protein uS3 (245 aa).

In terms of domain architecture, KH type-2 spans 39–111 (IRNFINKNYS…EVFFNVIEIK (73 aa)).

This sequence belongs to the universal ribosomal protein uS3 family. In terms of assembly, part of the 30S ribosomal subunit. Forms a tight complex with proteins S10 and S14.

In terms of biological role, binds the lower part of the 30S subunit head. Binds mRNA in the 70S ribosome, positioning it for translation. The chain is Small ribosomal subunit protein uS3 from Phytoplasma mali (strain AT).